A 152-amino-acid chain; its full sequence is D-aminoacyl-tRNA deacylase (152 aa).

A Gly-cisPro motif, important for rejection of L-amino acids motif is present at residues 142-143 (GP).

This sequence belongs to the DTD family. In terms of assembly, homodimer.

The protein localises to the cytoplasm. The enzyme catalyses glycyl-tRNA(Ala) + H2O = tRNA(Ala) + glycine + H(+). It carries out the reaction a D-aminoacyl-tRNA + H2O = a tRNA + a D-alpha-amino acid + H(+). In terms of biological role, an aminoacyl-tRNA editing enzyme that deacylates mischarged D-aminoacyl-tRNAs. Also deacylates mischarged glycyl-tRNA(Ala), protecting cells against glycine mischarging by AlaRS. Acts via tRNA-based rather than protein-based catalysis; rejects L-amino acids rather than detecting D-amino acids in the active site. By recycling D-aminoacyl-tRNA to D-amino acids and free tRNA molecules, this enzyme counteracts the toxicity associated with the formation of D-aminoacyl-tRNA entities in vivo and helps enforce protein L-homochirality. The protein is D-aminoacyl-tRNA deacylase of Burkholderia vietnamiensis (strain G4 / LMG 22486) (Burkholderia cepacia (strain R1808)).